The following is a 255-amino-acid chain: Triosephosphate isomerase (255 aa).

9–11 (NWK) is a binding site for substrate. Histidine 95 serves as the catalytic Electrophile. Glutamate 167 functions as the Proton acceptor in the catalytic mechanism. Substrate contacts are provided by residues glycine 173, serine 212, and 233–234 (GG).

Belongs to the triosephosphate isomerase family. Homodimer.

It localises to the cytoplasm. The enzyme catalyses D-glyceraldehyde 3-phosphate = dihydroxyacetone phosphate. It functions in the pathway carbohydrate biosynthesis; gluconeogenesis. It participates in carbohydrate degradation; glycolysis; D-glyceraldehyde 3-phosphate from glycerone phosphate: step 1/1. Involved in the gluconeogenesis. Catalyzes stereospecifically the conversion of dihydroxyacetone phosphate (DHAP) to D-glyceraldehyde-3-phosphate (G3P). The polypeptide is Triosephosphate isomerase (Escherichia fergusonii (strain ATCC 35469 / DSM 13698 / CCUG 18766 / IAM 14443 / JCM 21226 / LMG 7866 / NBRC 102419 / NCTC 12128 / CDC 0568-73)).